The chain runs to 975 residues: Glycine dehydrogenase (decarboxylating) (975 aa).

Lys723 carries the N6-(pyridoxal phosphate)lysine modification.

The protein belongs to the GcvP family. The glycine cleavage system is composed of four proteins: P, T, L and H. Pyridoxal 5'-phosphate is required as a cofactor.

It catalyses the reaction N(6)-[(R)-lipoyl]-L-lysyl-[glycine-cleavage complex H protein] + glycine + H(+) = N(6)-[(R)-S(8)-aminomethyldihydrolipoyl]-L-lysyl-[glycine-cleavage complex H protein] + CO2. Its function is as follows. The glycine cleavage system catalyzes the degradation of glycine. The P protein binds the alpha-amino group of glycine through its pyridoxal phosphate cofactor; CO(2) is released and the remaining methylamine moiety is then transferred to the lipoamide cofactor of the H protein. In Burkholderia multivorans (strain ATCC 17616 / 249), this protein is Glycine dehydrogenase (decarboxylating).